Reading from the N-terminus, the 149-residue chain is Protein-export protein SecB (149 aa).

Belongs to the SecB family. Homotetramer, a dimer of dimers. One homotetramer interacts with 1 SecA dimer.

The protein localises to the cytoplasm. Functionally, one of the proteins required for the normal export of preproteins out of the cell cytoplasm. It is a molecular chaperone that binds to a subset of precursor proteins, maintaining them in a translocation-competent state. It also specifically binds to its receptor SecA. This chain is Protein-export protein SecB, found in Acidithiobacillus ferrooxidans (strain ATCC 23270 / DSM 14882 / CIP 104768 / NCIMB 8455) (Ferrobacillus ferrooxidans (strain ATCC 23270)).